A 373-amino-acid polypeptide reads, in one-letter code: Trifolitoxin-processing protein TfxB (373 aa).

To E.coli McbC which is involved in the processing of microcin B17 (MCCB17).

It localises to the cytoplasm. In terms of biological role, the actions of the proteins TfxB, TfxD and TfxF are implicated in the processing of the inactive trifolitoxin (TfxA) precursor into the active peptide. In Rhizobium leguminosarum bv. trifolii, this protein is Trifolitoxin-processing protein TfxB (tfxB).